A 203-amino-acid polypeptide reads, in one-letter code: Non-histone protein 10 (203 aa).

An N-acetylserine modification is found at Ser-2. Disordered stretches follow at residues 78 to 97 (KSKT…PKRP) and 161 to 203 (ISNI…VSSN). A DNA-binding region (HMG box) is located at residues 94 to 158 (PKRPTNAYLL…RYQMEMEIYN (65 aa)).

Component of the chromatin-remodeling INO80 complex, at least composed of ARP4, ARP5, ARP8, RVB1, RVB2, TAF14, NHP10, IES1, IES3, IES4, IES6, ACT1, IES2, IES5 and INO80.

The protein localises to the nucleus. Functionally, probably involved in transcription regulation via its interaction with the INO80 complex, a chromatin remodeling complex. The polypeptide is Non-histone protein 10 (NHP10) (Saccharomyces cerevisiae (strain ATCC 204508 / S288c) (Baker's yeast)).